The chain runs to 339 residues: Fructose-1,6-bisphosphatase isozyme 2 (339 aa).

Residues 3-10 (DRSPFETD) form an important for interaction with ALDOA region. Residues Val-18 and 28–32 (TGELT) contribute to the AMP site. Mg(2+)-binding residues include Asp-69 and Glu-98. 113–114 (KY) lines the AMP pocket. Mg(2+)-binding residues include Asp-119, Leu-121, and Asp-122. Residue Asp-122 coordinates substrate. Arg-141 provides a ligand contact to AMP. The short motif at 204–208 (KKKGK) is the Nuclear localization signal element. 213 to 216 (NEGY) contacts substrate. 2 positions are modified to phosphotyrosine: Tyr-216 and Tyr-219. Residues 245–249 (YVGSM), Tyr-265, and Lys-275 each bind substrate. Glu-281 provides a ligand contact to Mg(2+).

Belongs to the FBPase class 1 family. In terms of assembly, homotetramer. Interacts with ALDOA; the interaction blocks inhibition by physiological concentrations of AMP and reduces inhibition by Ca(2+). Interacts with alpha-actinin and F-actin. The cofactor is Mg(2+).

The protein resides in the cell junction. It is found in the cytoplasm. It localises to the nucleus. The protein localises to the myofibril. Its subcellular location is the sarcomere. The protein resides in the z line. The catalysed reaction is beta-D-fructose 1,6-bisphosphate + H2O = beta-D-fructose 6-phosphate + phosphate. It participates in carbohydrate biosynthesis; gluconeogenesis. With respect to regulation, subject to complex allosteric regulation. The enzyme can assume an active R-state, or an inactive T-state. Intermediate conformations may exist. AMP acts as an allosteric inhibitor. Fructose 2,6-bisphosphate acts as a competitive inhibitor. Strongly inhibited by Ca(2+). Functionally, catalyzes the hydrolysis of fructose 1,6-bisphosphate to fructose 6-phosphate in the presence of divalent cations and probably participates in glycogen synthesis from carbohydrate precursors, such as lactate. The polypeptide is Fructose-1,6-bisphosphatase isozyme 2 (FBP2) (Bos taurus (Bovine)).